Consider the following 665-residue polypeptide: Probable potassium transport system protein Kup (665 aa).

The next 12 helical transmembrane spans lie at 15 to 35 (SFLI…LYVM), 48 to 68 (ITPD…TLLT), 100 to 120 (WLII…MLTP), 147 to 167 (IIII…HFGT), 173 to 193 (IFGP…IVNL), 219 to 239 (LGFF…ALYS), 251 to 271 (LTWP…AAWI), 292 to 312 (MMPS…AIIA), 348 to 368 (IYMP…VLYF), 378 to 398 (YGLS…NYLL), 403 to 423 (PLPI…SFLI), and 431 to 451 (KGGF…YIWI).

This sequence belongs to the HAK/KUP transporter (TC 2.A.72) family.

The protein resides in the cell membrane. The enzyme catalyses K(+)(in) + H(+)(in) = K(+)(out) + H(+)(out). Transport of potassium into the cell. Likely operates as a K(+):H(+) symporter. The polypeptide is Probable potassium transport system protein Kup (Clostridium perfringens (strain ATCC 13124 / DSM 756 / JCM 1290 / NCIMB 6125 / NCTC 8237 / Type A)).